A 301-amino-acid chain; its full sequence is Acidic endochitinase (301 aa).

Positions 1–25 (MARTPQSTPLLISLSVLALLQTSYA) are cleaved as a signal peptide. One can recognise a GH18 domain in the interval 26 to 301 (GGIAIYWGQN…GYSSSIKSSV (276 aa)). Disulfide bonds link cysteine 45-cysteine 92 and cysteine 75-cysteine 82. Catalysis depends on glutamate 152, which acts as the Proton donor. Cysteine 187 and cysteine 216 are oxidised to a cystine.

This sequence belongs to the glycosyl hydrolase 18 family. Chitinase class II subfamily.

It carries out the reaction Random endo-hydrolysis of N-acetyl-beta-D-glucosaminide (1-&gt;4)-beta-linkages in chitin and chitodextrins.. In terms of biological role, defense against chitin containing fungal pathogens. This Vitis vinifera (Grape) protein is Acidic endochitinase (CHIT3).